A 405-amino-acid polypeptide reads, in one-letter code: Growth/differentiation factor 11 (405 aa).

An N-terminal signal peptide occupies residues 1-20 (MVLAAPLLLGFLLLALELRP). A propeptide spanning residues 21–296 (RGEAAEGPAA…VLENTKRSRR (276 aa)) is cleaved from the precursor. The N-linked (GlcNAc...) asparagine glycan is linked to N92. Intrachain disulfides connect C302–C312, C311–C370, C339–C402, and C343–C404.

The protein belongs to the TGF-beta family. As to quaternary structure, homodimer; disulfide-linked. Interacts directly with ACVR2B. Interacts directly with ACVR2A. Interacts with ACVR1B, TGFBR1 and ACVR1C in an ACVR2B-dependent manner. Interacts with FST isoform 2/FS288. In terms of processing, synthesized as large precursor molecule that undergoes proteolytic cleavage by furin-like proteases. This produces an inactive form consisting of the mature C-terminal portion non-covalently bound to its cleaved N-terminal propeptide. Activation of the mature form requires additional cleavage of the propeptide by a tolloid-like metalloproteinase. Highly expressed in the developing limb bud, initially detected in the distal mesenchyme, and later localizing to regions around the developing bones. Is also expressed in adult dental pulp and brain.

The protein resides in the secreted. Secreted signal that acts globally to regulate anterior/posterior axial patterning during development. May play critical roles in patterning both mesodermal and neural tissues. It is required for proper vertebral patterning and orofacial development. Signals through activin receptors type-2, ACVR2A and ACVR2B, and activin receptors type-1, ACVR1B, ACVR1C and TGFBR1 leading to the phosphorylation of SMAD2 and SMAD3. This Mus musculus (Mouse) protein is Growth/differentiation factor 11 (Gdf11).